The sequence spans 495 residues: UDP-N-acetylmuramoyl-L-alanyl-D-glutamate--2,6-diaminopimelate ligase (495 aa).

UDP-N-acetyl-alpha-D-muramoyl-L-alanyl-D-glutamate contacts are provided by residues Leu-27, Ser-29, and 44-46; that span reads HQA. Position 116 to 122 (116 to 122) interacts with ATP; sequence GTNGKTT. Residues Asn-157, 158–159, Ser-185, Gln-191, and Arg-193 each bind UDP-N-acetyl-alpha-D-muramoyl-L-alanyl-D-glutamate; that span reads TT. N6-carboxylysine is present on Lys-225. Residues Arg-390, 414–417, Gly-465, and Glu-469 each bind meso-2,6-diaminopimelate; that span reads DNPR. Positions 414–417 match the Meso-diaminopimelate recognition motif motif; the sequence is DNPR.

Belongs to the MurCDEF family. MurE subfamily. The cofactor is Mg(2+). In terms of processing, carboxylation is probably crucial for Mg(2+) binding and, consequently, for the gamma-phosphate positioning of ATP.

It localises to the cytoplasm. The catalysed reaction is UDP-N-acetyl-alpha-D-muramoyl-L-alanyl-D-glutamate + meso-2,6-diaminopimelate + ATP = UDP-N-acetyl-alpha-D-muramoyl-L-alanyl-gamma-D-glutamyl-meso-2,6-diaminopimelate + ADP + phosphate + H(+). It functions in the pathway cell wall biogenesis; peptidoglycan biosynthesis. Its function is as follows. Catalyzes the addition of meso-diaminopimelic acid to the nucleotide precursor UDP-N-acetylmuramoyl-L-alanyl-D-glutamate (UMAG) in the biosynthesis of bacterial cell-wall peptidoglycan. The protein is UDP-N-acetylmuramoyl-L-alanyl-D-glutamate--2,6-diaminopimelate ligase of Shigella flexneri.